A 122-amino-acid polypeptide reads, in one-letter code: Large ribosomal subunit protein uL14c (122 aa).

The protein belongs to the universal ribosomal protein uL14 family. Part of the 50S ribosomal subunit.

It localises to the plastid. The protein resides in the chloroplast. Its function is as follows. Binds to 23S rRNA. The chain is Large ribosomal subunit protein uL14c from Pyropia yezoensis (Susabi-nori).